Consider the following 364-residue polypeptide: Methylthioribose-1-phosphate isomerase (364 aa).

D246 serves as the catalytic Proton donor.

Belongs to the eIF-2B alpha/beta/delta subunits family. MtnA subfamily.

The protein resides in the cytoplasm. It is found in the nucleus. It carries out the reaction 5-(methylsulfanyl)-alpha-D-ribose 1-phosphate = 5-(methylsulfanyl)-D-ribulose 1-phosphate. It functions in the pathway amino-acid biosynthesis; L-methionine biosynthesis via salvage pathway; L-methionine from S-methyl-5-thio-alpha-D-ribose 1-phosphate: step 1/6. Functionally, catalyzes the interconversion of methylthioribose-1-phosphate (MTR-1-P) into methylthioribulose-1-phosphate (MTRu-1-P). This is Methylthioribose-1-phosphate isomerase from Bombyx mori (Silk moth).